Here is a 287-residue protein sequence, read N- to C-terminus: MPWPFGPSGSSEAPPPQKPRDDKVEGREPAKSWNSLLPKPDPPLQAAKEWAPVFLTAVGSLAAFMFYQSYLRRFAGAASIQENFFRKRSLLGRVTSVGDGDGFHLYHTPGGKLAGWGWLRKIPEGRSNLKGETISIRLAGIDAPEGPHFGRPGQPFAAEAQAHLSKYILHRRVRAHLHKRDQYNRIVATVSTRQPFIKKDVGLEMLKQGLATTYEAKSGVEWGGKESIYKAAEAKAKAKKLGLWSIKASEFESPRDFKNRTQGNEKSERDVEGSTVQKPWWRRWLTG.

Residues 1–40 are disordered; it reads MPWPFGPSGSSEAPPPQKPRDDKVEGREPAKSWNSLLPKP. The span at 18-30 shows a compositional bias: basic and acidic residues; sequence KPRDDKVEGREPA. A helical membrane pass occupies residues 50–67; it reads WAPVFLTAVGSLAAFMFY. The TNase-like domain occupies 88–246; that stretch reads RSLLGRVTSV…KAKKLGLWSI (159 aa). Residue R137 is part of the active site. D142 contacts Ca(2+). Residues E145 and R185 contribute to the active site. The segment covering 254 to 272 has biased composition (basic and acidic residues); it reads PRDFKNRTQGNEKSERDVE. The interval 254-278 is disordered; sequence PRDFKNRTQGNEKSERDVEGSTVQK.

Belongs to the LCL3 family.

The protein resides in the mitochondrion. Its subcellular location is the membrane. The polypeptide is Probable endonuclease LCL3 (LCL3) (Verticillium alfalfae (strain VaMs.102 / ATCC MYA-4576 / FGSC 10136) (Verticillium wilt of alfalfa)).